The chain runs to 465 residues: Light-independent protochlorophyllide reductase subunit N (465 aa).

Positions 23, 48, and 108 each coordinate [4Fe-4S] cluster.

The protein belongs to the BchN/ChlN family. In terms of assembly, protochlorophyllide reductase is composed of three subunits; ChlL, ChlN and ChlB. Forms a heterotetramer of two ChlB and two ChlN subunits. [4Fe-4S] cluster serves as cofactor.

The catalysed reaction is chlorophyllide a + oxidized 2[4Fe-4S]-[ferredoxin] + 2 ADP + 2 phosphate = protochlorophyllide a + reduced 2[4Fe-4S]-[ferredoxin] + 2 ATP + 2 H2O. It participates in porphyrin-containing compound metabolism; chlorophyll biosynthesis (light-independent). In terms of biological role, component of the dark-operative protochlorophyllide reductase (DPOR) that uses Mg-ATP and reduced ferredoxin to reduce ring D of protochlorophyllide (Pchlide) to form chlorophyllide a (Chlide). This reaction is light-independent. The NB-protein (ChlN-ChlB) is the catalytic component of the complex. This is Light-independent protochlorophyllide reductase subunit N from Trichodesmium erythraeum (strain IMS101).